The chain runs to 346 residues: Flap endonuclease 1 (346 aa).

Positions 1-100 (MGVDIKELVE…KELERRYQIK (100 aa)) are N-domain. Residues Asp29, Asp82, Glu154, Glu156, Asp175, Asp177, and Asp238 each contribute to the Mg(2+) site. The tract at residues 118-260 (EARIYAQQTS…KALKLVKELK (143 aa)) is I-domain. The segment at 336-344 (KQQSLESWF) is interaction with PCNA.

It belongs to the XPG/RAD2 endonuclease family. FEN1 subfamily. In terms of assembly, interacts with PCNA. PCNA stimulates the nuclease activity without altering cleavage specificity. It depends on Mg(2+) as a cofactor.

Its function is as follows. Structure-specific nuclease with 5'-flap endonuclease and 5'-3' exonuclease activities involved in DNA replication and repair. During DNA replication, cleaves the 5'-overhanging flap structure that is generated by displacement synthesis when DNA polymerase encounters the 5'-end of a downstream Okazaki fragment. Binds the unpaired 3'-DNA end and kinks the DNA to facilitate 5' cleavage specificity. Cleaves one nucleotide into the double-stranded DNA from the junction in flap DNA, leaving a nick for ligation. Also involved in the base excision repair (BER) pathway. Acts as a genome stabilization factor that prevents flaps from equilibrating into structures that lead to duplications and deletions. Also possesses 5'-3' exonuclease activity on nicked or gapped double-stranded DNA. This Thermofilum pendens (strain DSM 2475 / Hrk 5) protein is Flap endonuclease 1.